An 84-amino-acid chain; its full sequence is Small ribosomal subunit protein uS17 (84 aa).

This sequence belongs to the universal ribosomal protein uS17 family. As to quaternary structure, part of the 30S ribosomal subunit.

One of the primary rRNA binding proteins, it binds specifically to the 5'-end of 16S ribosomal RNA. This is Small ribosomal subunit protein uS17 from Porphyromonas gingivalis (strain ATCC 33277 / DSM 20709 / CIP 103683 / JCM 12257 / NCTC 11834 / 2561).